The chain runs to 328 residues: 5,10-methylenetetrahydromethanopterin reductase (328 aa).

The protein belongs to the mer family.

The protein localises to the cytoplasm. The catalysed reaction is 5-methyl-5,6,7,8-tetrahydromethanopterin + oxidized coenzyme F420-(gamma-L-Glu)(n) + H(+) = 5,10-methylenetetrahydromethanopterin + reduced coenzyme F420-(gamma-L-Glu)(n). Its pathway is one-carbon metabolism; methanogenesis from CO(2); methyl-coenzyme M from 5,10-methylene-5,6,7,8-tetrahydromethanopterin: step 1/2. Its function is as follows. Catalyzes the reversible reduction of methylene-H(4)MPT to methyl-H(4)MPT. In Methanosarcina acetivorans (strain ATCC 35395 / DSM 2834 / JCM 12185 / C2A), this protein is 5,10-methylenetetrahydromethanopterin reductase.